The sequence spans 543 residues: Phenylalanine--tRNA ligase beta subunit (543 aa).

Positions 269–344 (FDFRIMRPAR…KSKGIENIEE (76 aa)) constitute a B5 domain. Residues Asp-322, Asp-328, Glu-331, and Asp-332 each contribute to the Mg(2+) site.

Belongs to the phenylalanyl-tRNA synthetase beta subunit family. Type 2 subfamily. As to quaternary structure, tetramer of two alpha and two beta subunits. Mg(2+) is required as a cofactor.

It is found in the cytoplasm. It carries out the reaction tRNA(Phe) + L-phenylalanine + ATP = L-phenylalanyl-tRNA(Phe) + AMP + diphosphate + H(+). This chain is Phenylalanine--tRNA ligase beta subunit, found in Thermoplasma acidophilum (strain ATCC 25905 / DSM 1728 / JCM 9062 / NBRC 15155 / AMRC-C165).